A 480-amino-acid polypeptide reads, in one-letter code: MIQVLLITICLAVFPFQGSSIVLDSGNLNEFEVVYPEKVTALPRAAVKNKYEDAMQYEFKVNGEPLLLHLERNKGLFSDDYSEIHYSPDAREISAYPSVEDHCFYHGRVENDADSTASLSACDGLKAHFKIQGEMYLIEPLEVSDTDAHAVFKYENVEKEDEPPKMCGVTQNWESYESTKKASQLNVSPDQQRFPQRFIKLAIYVDHGMYTKYAGNSERITKRVHQMINNINMMCRALNIVTSLSVLRIWSEKDLITVNASAPSSLTLFGAWRETVLLNRTSHDHAQLMTATIFNGNVIGRAPVGGMCDPKRSVAIVRDHNAILFIVAVTMTHEMGHNLGMHHDEDKCNCNTCIMSKVLSRQPSYEFSDCNENEYQTYVTDHSPQCILNDPLRPDTVSTPVSGNELLEAGEECDCGSPGNPCCDAATCKLRQGAQCAEGLCCDQCRFMKKGTVCRIARGDDMDDYCNGISAGCPRNPFHA.

An N-terminal signal peptide occupies residues 1-20; sequence MIQVLLITICLAVFPFQGSS. The propeptide occupies 21–190; sequence IVLDSGNLNE…KASQLNVSPD (170 aa). A Peptidase M12B domain is found at 197–391; the sequence is RFIKLAIYVD…HSPQCILNDP (195 aa). N-linked (GlcNAc...) asparagine glycosylation is found at Asn-259 and Asn-279. 9 disulfides stabilise this stretch: Cys-308-Cys-386, Cys-348-Cys-370, Cys-350-Cys-353, Cys-413-Cys-428, Cys-415-Cys-423, Cys-422-Cys-445, Cys-436-Cys-442, Cys-441-Cys-466, and Cys-454-Cys-473. His-333 serves as a coordination point for Zn(2+). Residue Glu-334 is part of the active site. Positions 337 and 343 each coordinate Zn(2+). The 82-residue stretch at 399 to 480 folds into the Disintegrin domain; sequence TPVSGNELLE…AGCPRNPFHA (82 aa). Positions 458–460 match the Cell attachment site motif; it reads RGD.

Belongs to the venom metalloproteinase (M12B) family. P-II subfamily. P-IIa sub-subfamily. In terms of assembly, monomer. The cofactor is Zn(2+). As to expression, expressed by the venom gland.

It is found in the secreted. Impairs hemostasis in the envenomed animal. In terms of biological role, inhibits platelet aggregation and bone resorption. This Gloydius halys (Chinese water mocassin) protein is Zinc metalloproteinase/disintegrin.